Consider the following 62-residue polypeptide: Synergistic-type venom protein C8S2, chain 1 (62 aa).

Intrachain disulfides connect Cys-3–Cys-24, Cys-17–Cys-42, and Cys-46–Cys-57.

It belongs to the three-finger toxin family. Short-chain subfamily. Aminergic toxin sub-subfamily. As to quaternary structure, heterodimer of C8S2 chain 1 and chain 2 (AC P01411); disulfide-linked. In terms of tissue distribution, expressed by the venom gland.

Its subcellular location is the secreted. Functionally, this protein shows a synergetic toxic effect in that it enhances the toxicity of other toxins. The chain is Synergistic-type venom protein C8S2, chain 1 from Dendroaspis angusticeps (Eastern green mamba).